The sequence spans 727 residues: Endothelin-converting enzyme homolog (727 aa).

Residues 1–44 (MSFNFSRYSGAYTTTFSFLLLALLIVSAVLLSRPYAPALLHAEE) lie on the Cytoplasmic side of the membrane. Residues 45–65 (AYCVSMSCVTAAASVLSLMDA) form a helical; Signal-anchor for type II membrane protein membrane-spanning segment. In terms of domain architecture, Peptidase M13 spans 46-727 (YCVSMSCVTA…MNPVHKCEVW (682 aa)). Intrachain disulfides connect C47–C52, C70–C712, C78–C672, C134–C392, and C601–C724. Residues 66 to 727 (TADPCSDFYQ…MNPVHKCEVW (662 aa)) are Extracellular-facing. N-linked (GlcNAc...) asparagine glycosylation is found at N138, N160, N164, N169, N222, N309, N337, N340, and N511. H564 is a binding site for Zn(2+). E565 is a catalytic residue. H568 serves as a coordination point for Zn(2+). N589 and N608 each carry an N-linked (GlcNAc...) asparagine glycan. A Zn(2+)-binding site is contributed by E624. D628 (proton donor) is an active-site residue. Residue N656 is glycosylated (N-linked (GlcNAc...) asparagine).

It belongs to the peptidase M13 family. Requires Zn(2+) as cofactor. Highly expressed in brain and midgut, and to a lesser extent in fat body, ovaries, testes and haemocytes.

The protein localises to the cell membrane. The protein is Endothelin-converting enzyme homolog of Locusta migratoria (Migratory locust).